Consider the following 445-residue polypeptide: ATP-dependent rRNA helicase rrp3 (445 aa).

Positions 1-10 (MSKNSSRDSS) are enriched in basic and acidic residues. The segment at 1–28 (MSKNSSRDSSPEEVSPDTETPSTTTAPK) is disordered. The segment covering 17-28 (DTETPSTTTAPK) has biased composition (low complexity). Positions 28–56 (KTFRELGVIDSLCEACEELGYTAPTPIQE) match the Q motif motif. Residues 59–229 (IPIALEGRDL…RASLSDPVRV (171 aa)) form the Helicase ATP-binding domain. An ATP-binding site is contributed by 72-79 (AETGSGKT). The DEAD box signature appears at 178–181 (DEAD). The region spanning 240-400 (KLLQSYLFIP…EYKPEKDEVM (161 aa)) is the Helicase C-terminal domain. The interval 415 to 445 (LTMRDMQDKDNKGRGPRNRKRTRDDLDQDDG) is disordered.

It belongs to the DEAD box helicase family. DDX47/RRP3 subfamily. Interacts with the SSU processome.

The protein localises to the nucleus. It carries out the reaction ATP + H2O = ADP + phosphate + H(+). Functionally, ATP-dependent rRNA helicase required for pre-ribosomal RNA processing. Involved in the maturation of the 35S-pre-rRNA and to its cleavage to mature 18S rRNA. This Aspergillus terreus (strain NIH 2624 / FGSC A1156) protein is ATP-dependent rRNA helicase rrp3.